A 340-amino-acid polypeptide reads, in one-letter code: Ferrochelatase (340 aa).

Positions 189 and 292 each coordinate Fe cation.

This sequence belongs to the ferrochelatase family.

It is found in the cytoplasm. The enzyme catalyses heme b + 2 H(+) = protoporphyrin IX + Fe(2+). Its pathway is porphyrin-containing compound metabolism; protoheme biosynthesis; protoheme from protoporphyrin-IX: step 1/1. Catalyzes the ferrous insertion into protoporphyrin IX. The protein is Ferrochelatase of Pseudomonas savastanoi pv. phaseolicola (strain 1448A / Race 6) (Pseudomonas syringae pv. phaseolicola (strain 1448A / Race 6)).